A 135-amino-acid polypeptide reads, in one-letter code: Ribonuclease VapC5 (135 aa).

A PINc domain is found at 9-130; sequence VLDTSVFIAT…FAALDGAASV (122 aa). Mg(2+)-binding residues include Asp-11 and Asp-100.

Belongs to the PINc/VapC protein family. As to quaternary structure, forms a complex with VapB5. Mg(2+) is required as a cofactor.

The protein localises to the secreted. Its function is as follows. Probable toxic component of a type II toxin-antitoxin (TA) system. The cognate antitoxin is VapB5. Has limited RNase activity on substrates; activity is seen with a VapC5-VapB5 complex. The polypeptide is Ribonuclease VapC5 (Mycobacterium tuberculosis (strain ATCC 25618 / H37Rv)).